The chain runs to 317 residues: Protein PXR1 (317 aa).

The region spanning 25–79 is the G-patch domain; that stretch reads TTGYGHRIMSAQGWTPGAFLGAPGAAHSSCYTAASASHIRVVLKDDTLGLGARPR. Residues 152–268 are disordered; sequence EQANKDDSSD…PNKQSAQQST (117 aa). The span at 154–170 shows a compositional bias: basic and acidic residues; the sequence is ANKDDSSDPKSRQETTQ. A compositionally biased stretch (basic residues) spans 171 to 182; that stretch reads KRPKKEKRKEKS. A compositionally biased stretch (polar residues) spans 192 to 219; the sequence is RSISSKPERGTINSANQTSDDESTNIVP. Residues 224–236 are compositionally biased toward basic residues; sequence SRKKEKKKKSKKR.

This sequence belongs to the PINX1 family.

It localises to the nucleus. The protein localises to the nucleolus. Functionally, involved in rRNA-processing at A0, A1 and A2 sites and negatively regulates telomerase. This chain is Protein PXR1 (PXR1), found in Coccidioides immitis (strain RS) (Valley fever fungus).